The primary structure comprises 306 residues: Homoserine kinase (306 aa).

Residue 91–101 (PLARGLGSSAT) participates in ATP binding.

It belongs to the GHMP kinase family. Homoserine kinase subfamily.

The protein localises to the cytoplasm. It catalyses the reaction L-homoserine + ATP = O-phospho-L-homoserine + ADP + H(+). It functions in the pathway amino-acid biosynthesis; L-threonine biosynthesis; L-threonine from L-aspartate: step 4/5. Functionally, catalyzes the ATP-dependent phosphorylation of L-homoserine to L-homoserine phosphate. This Synechocystis sp. (strain ATCC 27184 / PCC 6803 / Kazusa) protein is Homoserine kinase.